Consider the following 596-residue polypeptide: uncharacterized protein (596 aa).

Basic residues-rich tracts occupy residues 1 to 10 and 18 to 29; these read MRLRSQKRGN and KTRKGKGKKLKP. Residues 1-30 form a disordered region; that stretch reads MRLRSQKRGNKFVALPAKTRKGKGKKLKPK.

This is an uncharacterized protein from Magallana gigas (Pacific oyster).